Here is a 522-residue protein sequence, read N- to C-terminus: Endochitinase 11 (522 aa).

The signal sequence occupies residues 1–24 (MLFSMVMFTERWWVGSKDCPRVPA). N-linked (GlcNAc...) asparagine glycosylation is found at Asn-148 and Asn-275. In terms of domain architecture, GH18 spans 235–522 (KHVYAPYVDF…ALTCLRNSTA (288 aa)). Glu-346 (proton donor) is an active-site residue. N-linked (GlcNAc...) asparagine glycans are attached at residues Asn-455 and Asn-519.

This sequence belongs to the glycosyl hydrolase 18 family. Chitinase class V subfamily.

The protein localises to the secreted. It catalyses the reaction Random endo-hydrolysis of N-acetyl-beta-D-glucosaminide (1-&gt;4)-beta-linkages in chitin and chitodextrins.. Its function is as follows. Secreted chitinase involved in the degradation of chitin, a component of the cell walls of fungi and exoskeletal elements of some animals (including worms and arthropods). Participates in the infection process and directly acts in the penetration process of the host cuticle. The chain is Endochitinase 11 (chi11) from Metarhizium anisopliae (Entomophthora anisopliae).